The following is a 513-amino-acid chain: MTADIHHIGGAPVIIGAGIAGLMTALHLAPQPVVLLSRTSLGTEASSILAQGGLAASLGEDDSPDLHLADTLAAGEGLCDEQMARRVVEAAPQAVENLIRLGTPFDRSLDGRLQLGLEAAHSRRRIVHAAGDATGRELFRALLGVARRTRSITIMEGMTALRLVVAEGSIVGLLTVLHGAVFALPTRRVVLATGGIGGLFCDTTNPLSSFGHGLALAACAGAELADLEFVQFHPTALDIARRPMPLVSEAVRGEGAVLIDEHGHRLLADTPGAELASRDVVARAISDQLAAGHGVYLDARHCLGQKFARRFPAIDAICKHAGIDPAVEPIPVRPAAHYHMGGVAVDAEGRTSVSGLWACGEVACTGLHGANRLASNSLTEAVATAAWVAESVAGTSAGWQWPRLPATVPIRPDPSPIRTIVSNALGIVRNGKSLCDTVATLLPISVCETAAADPALVALLMAIAALRREESRGSHFRSDFPGRDAAALPSRLTLCTAFENAVTLRWQASERSR.

FAD-binding positions include 17–20 (AGIA) and 46–53 (SSILAQGG). Catalysis depends on Arg-278, which acts as the Proton donor/acceptor. FAD contacts are provided by residues Glu-361 and 377 to 378 (SL).

It belongs to the FAD-dependent oxidoreductase 2 family. NadB subfamily. FAD serves as cofactor.

The protein localises to the cytoplasm. It carries out the reaction L-aspartate + O2 = iminosuccinate + H2O2. The protein operates within cofactor biosynthesis; NAD(+) biosynthesis; iminoaspartate from L-aspartate (oxidase route): step 1/1. Its function is as follows. Catalyzes the oxidation of L-aspartate to iminoaspartate, the first step in the de novo biosynthesis of NAD(+). The sequence is that of L-aspartate oxidase (nadB) from Mesorhizobium japonicum (strain LMG 29417 / CECT 9101 / MAFF 303099) (Mesorhizobium loti (strain MAFF 303099)).